The primary structure comprises 279 residues: Ribosomal RNA small subunit methyltransferase A (279 aa).

S-adenosyl-L-methionine-binding residues include Asn-27, Leu-29, Gly-54, Glu-76, Asp-102, and Asn-127.

Belongs to the class I-like SAM-binding methyltransferase superfamily. rRNA adenine N(6)-methyltransferase family. RsmA subfamily.

It localises to the cytoplasm. The enzyme catalyses adenosine(1518)/adenosine(1519) in 16S rRNA + 4 S-adenosyl-L-methionine = N(6)-dimethyladenosine(1518)/N(6)-dimethyladenosine(1519) in 16S rRNA + 4 S-adenosyl-L-homocysteine + 4 H(+). Functionally, specifically dimethylates two adjacent adenosines (A1518 and A1519) in the loop of a conserved hairpin near the 3'-end of 16S rRNA in the 30S particle. May play a critical role in biogenesis of 30S subunits. The protein is Ribosomal RNA small subunit methyltransferase A of Mesorhizobium japonicum (strain LMG 29417 / CECT 9101 / MAFF 303099) (Mesorhizobium loti (strain MAFF 303099)).